The chain runs to 836 residues: Hypoxia-inducible factor 1-alpha (836 aa).

Positions 1-30 (MEGAGGENEKKKMSSERRKEKSRDAARSRR) are disordered. The tract at residues 1–401 (MEGAGGENEK…KEPDALTLLA (401 aa)) is interaction with TSGA10. Basic and acidic residues predominate over residues 7–30 (ENEKKKMSSERRKEKSRDAARSRR). The bHLH domain maps to 17–70 (RRKEKSRDAARSRRSKESEVFYELAHQLPLPHNVSSHLDKASVMRLTISYLRVR). A DNA-binding region spans residues 21–30 (KSRDAARSRR). One can recognise a PAS 1 domain in the interval 80–155 (SEDEMKAQMD…EMLTHRNGPV (76 aa)). A required for heterodimer formation with ARNT region spans residues 170–191 (RMKCTLTSRGRTMNIKSATWKV). A PAS 2 domain is found at 228–298 (PHPSNIEIPL…KTHHDMFTKG (71 aa)). Ser247 is modified (phosphoserine; by CK1). The 44-residue stretch at 302 to 345 (TGQYRMLAKRGGYVWVETQATVIYNTKNSQPQCIVCVNYVVSGI) folds into the PAC domain. The tract at residues 380 to 417 (SEDTSCLFDKLKKEPDALTLLAPAAGDTIISLDFGSDD) is N-terminal VHL recognition site. Lys391 participates in a covalent cross-link: Glycyl lysine isopeptide (Lys-Gly) (interchain with G-Cter in SUMO). The tract at residues 401–613 (APAAGDTIIS…PSMSTVTGFQ (213 aa)) is ODD. Pro402 carries the 4-hydroxyproline modification. Lys476 is covalently cross-linked (Glycyl lysine isopeptide (Lys-Gly) (interchain with G-Cter in SUMO)). A disordered region spans residues 492–511 (QIQDQPASPSDGSTRQSSPE). The tract at residues 544-588 (FKLELVEKLFAEDTEAKNPFSTQDTDLDLEMLAPYIPMDDDFQLR) is NTAD. Residue Lys545 is modified to N6-acetyllysine; alternate. Residues Lys545, Lys551, and Lys560 each participate in a glycyl lysine isopeptide (Lys-Gly) (interchain with G-Cter in ubiquitin) cross-link. Lys545 participates in a covalent cross-link: Glycyl lysine isopeptide (Lys-Gly) (interchain with G-Cter in ubiquitin); alternate. Ser564 bears the Phosphoserine; by GSK3-beta mark. Thr568 carries the post-translational modification Phosphothreonine; by GSK3-beta. Residues 569 to 585 (DLDLEMLAPYIPMDDDF) are C-terminal VHL recognition site. Pro577 carries the post-translational modification 4-hydroxyproline. Residue Ser589 is modified to Phosphoserine; by PLK3. An ID region spans residues 589–795 (SFDQLSPLES…SDLACRLLGQ (207 aa)). Disordered stretches follow at residues 593 to 684 (LSPL…DRAG) and 707 to 734 (QRNTVPEEELNPKTIASQNAQRKRKMEH). Ser602 carries the post-translational modification Phosphoserine; by GSK3-beta. Residues 608–620 (TVTGFQQTQLQKP) show a composition bias toward polar residues. Positions 621–632 (TITATATTTATT) are enriched in low complexity. Residues 633–647 (DESKTETKDNKEDIK) are compositionally biased toward basic and acidic residues. Residues 652 to 678 (SPSSTQVPQETTTAKASAYSGTHSRTA) show a composition bias toward polar residues. Phosphoserine; by PLK3 is present on Ser668. Residue Lys719 is modified to N6-acetyllysine. Positions 728–731 (RKRK) match the Nuclear localization signal motif. The tract at residues 796–836 (SMDESGLPQLTSYDCEVNAPIQGSRNLLQGEELLRALDQVN) is CTAD. S-nitrosocysteine is present on Cys810. Asn813 bears the (3S)-3-hydroxyasparagine mark.

In terms of assembly, interacts with the ARNT; forms a heterodimer that binds core DNA sequence 5'-TACGTG-3' within the hypoxia response element (HRE) of target gene promoters. Interacts with COPS5; the interaction increases the transcriptional activity of HIF1A through increased stability. Interacts with EP300 (via TAZ-type 1 domains); the interaction is stimulated in response to hypoxia and inhibited by CITED2. Interacts with CREBBP (via TAZ-type 1 domains). Interacts with NCOA1, NCOA2, APEX1 and HSP90. Interacts (hydroxylated within the ODD domain) with VHLL (via beta domain); the interaction, leads to polyubiquitination and subsequent HIF1A proteasomal degradation. During hypoxia, sumoylated HIF1A also binds VHL; the interaction promotes the ubiquitination of HIF1A. Interacts with SENP1; the interaction desumoylates HIF1A resulting in stabilization and activation of transcription. Interacts (via the ODD domain) with NAA10; the interaction appears not to acetylate HIF1A nor have any affect on protein stability, during hypoxia. Interacts with RWDD3; the interaction enhances HIF1A sumoylation. Interacts with TSGA10. Interacts with HIF3A. Interacts with RORA (via the DNA binding domain); the interaction enhances HIF1A transcription under hypoxia through increasing protein stability. Interaction with PSMA7 inhibits the transactivation activity of HIF1A under both normoxic and hypoxia-mimicking conditions. Interacts with USP20. Interacts with RACK1; promotes HIF1A ubiquitination and proteasome-mediated degradation. Interacts (via N-terminus) with USP19. Interacts with SIRT2. Interacts (deacetylated form) with EGLN1. Interacts with CBFA2T3. Interacts with HSP90AA1 and HSP90AB1. Interacts with DCUN1D1; this interaction increases the interaction between VHL and DCUN1D1. Interacts with HIF1AN. S-nitrosylation of Cys-810 may be responsible for increased recruitment of p300 coactivator necessary for transcriptional activity of HIF-1 complex. Post-translationally, requires phosphorylation for DNA-binding. Phosphorylation at Ser-247 by CSNK1D/CK1 represses kinase activity and impairs ARNT binding. Phosphorylation by GSK3-beta and PLK3 promote degradation by the proteasome. In terms of processing, sumoylated; with SUMO1 under hypoxia. Sumoylation is enhanced through interaction with RWDD3. Both sumoylation and desumoylation seem to be involved in the regulation of its stability during hypoxia. Sumoylation can promote either its stabilization or its VHL-dependent degradation by promoting hydroxyproline-independent HIF1A-VHL complex binding, thus leading to HIF1A ubiquitination and proteasomal degradation. Desumoylation by SENP1 increases its stability amd transcriptional activity. There is a disaccord between various publications on the effect of sumoylation and desumoylation on its stability and transcriptional activity. Acetylation of Lys-545 by ARD1 increases interaction with VHL and stimulates subsequent proteasomal degradation. Deacetylation of Lys-719 by SIRT2 increases its interaction with and hydroxylation by EGLN1 thereby inactivating HIF1A activity by inducing its proteasomal degradation. Post-translationally, ubiquitinated; in normoxia, following hydroxylation and interaction with VHL. Lys-545 appears to be the principal site of ubiquitination. Clioquinol, the Cu/Zn-chelator, inhibits ubiquitination through preventing hydroxylation at Asn-813. Ubiquitinated by E3 ligase VHL. Deubiquitinated by UCHL1. In terms of processing, the iron and 2-oxoglutarate dependent 3-hydroxylation of asparagine is (S) stereospecific within HIF CTAD domains. In normoxia, is hydroxylated on Pro-402 and Pro-577 in the oxygen-dependent degradation domain (ODD) by EGLN1/PHD2 and EGLN2/PHD1. EGLN3/PHD3 has also been shown to hydroxylate Pro-577. The hydroxylated prolines promote interaction with VHL, initiating rapid ubiquitination and subsequent proteasomal degradation. Deubiquitinated by USP20. Under hypoxia, proline hydroxylation is impaired and ubiquitination is attenuated, resulting in stabilization. In normoxia, is hydroxylated on Asn-813 by HIF1AN, thus abrogating interaction with CREBBP and EP300 and preventing transcriptional activation. Repressed by iron ion, via Fe(2+) prolyl hydroxylase (PHD) enzymes-mediated hydroxylation and subsequent proteasomal degradation. In terms of tissue distribution, ubiquitous.

It localises to the cytoplasm. It is found in the nucleus. Its subcellular location is the nucleus speckle. Its activity is regulated as follows. Induced by reactive oxygen species (ROS). In terms of biological role, functions as a master transcriptional regulator of the adaptive response to hypoxia. Under hypoxic conditions, activates the transcription of over 40 genes, including erythropoietin, glucose transporters, glycolytic enzymes, vascular endothelial growth factor, HILPDA, and other genes whose protein products increase oxygen delivery or facilitate metabolic adaptation to hypoxia. Plays an essential role in embryonic vascularization, tumor angiogenesis and pathophysiology of ischemic disease. Heterodimerizes with ARNT; heterodimer binds to core DNA sequence 5'-TACGTG-3' within the hypoxia response element (HRE) of target gene promoters. Activation requires recruitment of transcriptional coactivators such as CREBBP and EP300. Activity is enhanced by interaction with NCOA1 and/or NCOA2. Interaction with redox regulatory protein APEX1 seems to activate CTAD and potentiates activation by NCOA1 and CREBBP. Involved in the axonal distribution and transport of mitochondria in neurons during hypoxia. This Mus musculus (Mouse) protein is Hypoxia-inducible factor 1-alpha (Hif1a).